The sequence spans 270 residues: Ethanolamine ammonia-lyase small subunit (270 aa).

Residues Val161, Glu182, and Cys211 each contribute to the adenosylcob(III)alamin site.

It belongs to the EutC family. The basic unit is a heterodimer which dimerizes to form tetramers. The heterotetramers trimerize; 6 large subunits form a core ring with 6 small subunits projecting outwards. Adenosylcob(III)alamin is required as a cofactor.

It localises to the bacterial microcompartment. It carries out the reaction ethanolamine = acetaldehyde + NH4(+). It participates in amine and polyamine degradation; ethanolamine degradation. Catalyzes the deamination of various vicinal amino-alcohols to oxo compounds. Allows this organism to utilize ethanolamine as the sole source of nitrogen and carbon in the presence of external vitamin B12. This Azotobacter vinelandii (strain DJ / ATCC BAA-1303) protein is Ethanolamine ammonia-lyase small subunit.